Consider the following 111-residue polypeptide: Large ribosomal subunit protein uL22 (111 aa).

This sequence belongs to the universal ribosomal protein uL22 family. In terms of assembly, part of the 50S ribosomal subunit.

This protein binds specifically to 23S rRNA; its binding is stimulated by other ribosomal proteins, e.g. L4, L17, and L20. It is important during the early stages of 50S assembly. It makes multiple contacts with different domains of the 23S rRNA in the assembled 50S subunit and ribosome. Its function is as follows. The globular domain of the protein is located near the polypeptide exit tunnel on the outside of the subunit, while an extended beta-hairpin is found that lines the wall of the exit tunnel in the center of the 70S ribosome. In Acholeplasma laidlawii (strain PG-8A), this protein is Large ribosomal subunit protein uL22.